Consider the following 567-residue polypeptide: Oxygen-dependent choline dehydrogenase (567 aa).

4–33 (DYIIIGAGSAGNVLAARLTEDADVTVLLLE) contacts FAD. Histidine 473 functions as the Proton acceptor in the catalytic mechanism.

It belongs to the GMC oxidoreductase family. The cofactor is FAD.

It carries out the reaction choline + A = betaine aldehyde + AH2. It catalyses the reaction betaine aldehyde + NAD(+) + H2O = glycine betaine + NADH + 2 H(+). It participates in amine and polyamine biosynthesis; betaine biosynthesis via choline pathway; betaine aldehyde from choline (cytochrome c reductase route): step 1/1. Involved in the biosynthesis of the osmoprotectant glycine betaine. Catalyzes the oxidation of choline to betaine aldehyde and betaine aldehyde to glycine betaine at the same rate. The chain is Oxygen-dependent choline dehydrogenase from Yersinia pseudotuberculosis serotype IB (strain PB1/+).